The chain runs to 104 residues: Large ribosomal subunit protein uL24 (104 aa).

Belongs to the universal ribosomal protein uL24 family. As to quaternary structure, part of the 50S ribosomal subunit.

In terms of biological role, one of two assembly initiator proteins, it binds directly to the 5'-end of the 23S rRNA, where it nucleates assembly of the 50S subunit. One of the proteins that surrounds the polypeptide exit tunnel on the outside of the subunit. This chain is Large ribosomal subunit protein uL24, found in Idiomarina loihiensis (strain ATCC BAA-735 / DSM 15497 / L2-TR).